The chain runs to 284 residues: Origin of replication complex subunit 6 (284 aa).

It belongs to the ORC6 family. As to quaternary structure, component of the origin recognition complex (ORC) composed of at least ORC1 (ORC1A or ORC1B), ORC2, ORC3, ORC4, ORC5 and ORC6. ORC is regulated in a cell-cycle and development dependent manner. It is sequentially assembled at the exit from anaphase of mitosis and disassembled as cells enter S phase. Interacts directly with ORC2, ORC3, ORC4 and ORC5. Follow a cell-cycle regulation with a peak at the G1/S-phase. Mostly expressed in siliques, flowers, flower buds and mature leaves, and, to a lower exent, in roots, leaves and stems.

The protein localises to the nucleus. Functionally, component of the origin recognition complex (ORC) that binds origins of replication. DNA-binding is ATP-dependent. The specific DNA sequences that define origins of replication have not been identified yet. ORC is required to assemble the pre-replication complex necessary to initiate DNA replication. The sequence is that of Origin of replication complex subunit 6 from Arabidopsis thaliana (Mouse-ear cress).